Reading from the N-terminus, the 528-residue chain is tRNA-2-methylthio-N(6)-dimethylallyladenosine synthase (528 aa).

The MTTase N-terminal domain occupies 19–134 (RTYEVRTYGC…LPTLLERARH (116 aa)). Cysteine 28, cysteine 63, cysteine 97, cysteine 171, cysteine 175, and cysteine 178 together coordinate [4Fe-4S] cluster. One can recognise a Radical SAM core domain in the interval 157–387 (RDEIASGWVS…TALQERISHE (231 aa)). In terms of domain architecture, TRAM spans 390-460 (QRVVGRTVEV…PFHLIADSVD (71 aa)).

It belongs to the methylthiotransferase family. MiaB subfamily. As to quaternary structure, monomer. Requires [4Fe-4S] cluster as cofactor.

Its subcellular location is the cytoplasm. It carries out the reaction N(6)-dimethylallyladenosine(37) in tRNA + (sulfur carrier)-SH + AH2 + 2 S-adenosyl-L-methionine = 2-methylsulfanyl-N(6)-dimethylallyladenosine(37) in tRNA + (sulfur carrier)-H + 5'-deoxyadenosine + L-methionine + A + S-adenosyl-L-homocysteine + 2 H(+). Functionally, catalyzes the methylthiolation of N6-(dimethylallyl)adenosine (i(6)A), leading to the formation of 2-methylthio-N6-(dimethylallyl)adenosine (ms(2)i(6)A) at position 37 in tRNAs that read codons beginning with uridine. The sequence is that of tRNA-2-methylthio-N(6)-dimethylallyladenosine synthase from Clavibacter michiganensis subsp. michiganensis (strain NCPPB 382).